We begin with the raw amino-acid sequence, 463 residues long: GTPase Der (463 aa).

EngA-type G domains follow at residues 3 to 166 (PVVA…PESG) and 177 to 350 (IRIA…QSAM). GTP is bound by residues 9 to 16 (GRTNVGKS), 56 to 60 (DTGGI), 118 to 121 (NKID), 183 to 190 (GRPNVGKS), 230 to 234 (DTAGI), and 295 to 298 (NKWD). One can recognise a KH-like domain in the interval 351-435 (LDLSASRLTQ…PLKLVFKSAE (85 aa)).

It belongs to the TRAFAC class TrmE-Era-EngA-EngB-Septin-like GTPase superfamily. EngA (Der) GTPase family. As to quaternary structure, associates with the 50S ribosomal subunit.

Its function is as follows. GTPase that plays an essential role in the late steps of ribosome biogenesis. The polypeptide is GTPase Der (Methylococcus capsulatus (strain ATCC 33009 / NCIMB 11132 / Bath)).